The following is a 241-amino-acid chain: ATP synthase subunit a (241 aa).

Transmembrane regions (helical) follow at residues Gly-30–Gly-50, Leu-89–Ile-109, Ile-128–Ser-148, Leu-193–Leu-213, and Gly-214–Gly-234.

The protein belongs to the ATPase A chain family. In terms of assembly, F-type ATPases have 2 components, CF(1) - the catalytic core - and CF(0) - the membrane proton channel. CF(1) has five subunits: alpha(3), beta(3), gamma(1), delta(1), epsilon(1). CF(0) has four main subunits: a, b, b' and c.

The protein resides in the cellular thylakoid membrane. Functionally, key component of the proton channel; it plays a direct role in the translocation of protons across the membrane. This chain is ATP synthase subunit a, found in Synechococcus sp. (strain CC9605).